Here is a 258-residue protein sequence, read N- to C-terminus: Imidazole glycerol phosphate synthase subunit HisF (258 aa).

Catalysis depends on residues aspartate 11 and aspartate 130.

Belongs to the HisA/HisF family. In terms of assembly, heterodimer of HisH and HisF.

Its subcellular location is the cytoplasm. The enzyme catalyses 5-[(5-phospho-1-deoxy-D-ribulos-1-ylimino)methylamino]-1-(5-phospho-beta-D-ribosyl)imidazole-4-carboxamide + L-glutamine = D-erythro-1-(imidazol-4-yl)glycerol 3-phosphate + 5-amino-1-(5-phospho-beta-D-ribosyl)imidazole-4-carboxamide + L-glutamate + H(+). Its pathway is amino-acid biosynthesis; L-histidine biosynthesis; L-histidine from 5-phospho-alpha-D-ribose 1-diphosphate: step 5/9. Its function is as follows. IGPS catalyzes the conversion of PRFAR and glutamine to IGP, AICAR and glutamate. The HisF subunit catalyzes the cyclization activity that produces IGP and AICAR from PRFAR using the ammonia provided by the HisH subunit. The polypeptide is Imidazole glycerol phosphate synthase subunit HisF (Yersinia pseudotuberculosis serotype IB (strain PB1/+)).